The primary structure comprises 128 residues: Large ribosomal subunit protein bL17 (128 aa).

The protein belongs to the bacterial ribosomal protein bL17 family. Part of the 50S ribosomal subunit. Contacts protein L32.

The sequence is that of Large ribosomal subunit protein bL17 from Pseudomonas entomophila (strain L48).